The chain runs to 354 residues: Adenine deaminase (354 aa).

3 residues coordinate Zn(2+): His-19, His-21, and His-211. Catalysis depends on Glu-214, which acts as the Proton donor. Asp-291 is a Zn(2+) binding site. Asp-292 contacts substrate.

Belongs to the metallo-dependent hydrolases superfamily. Adenosine and AMP deaminases family. Adenine deaminase type 2 subfamily. Zn(2+) is required as a cofactor.

It is found in the cytoplasm. Its subcellular location is the nucleus. It catalyses the reaction adenine + H2O + H(+) = hypoxanthine + NH4(+). Functionally, catalyzes the hydrolytic deamination of adenine to hypoxanthine. Plays an important role in the purine salvage pathway and in nitrogen catabolism. The protein is Adenine deaminase (aah1) of Aspergillus fumigatus (strain ATCC MYA-4609 / CBS 101355 / FGSC A1100 / Af293) (Neosartorya fumigata).